Reading from the N-terminus, the 239-residue chain is Ribosomal RNA small subunit methyltransferase G (239 aa).

Residues Gly-95, Leu-100, 118–120 (EAT), 146–147 (AE), and Arg-164 each bind S-adenosyl-L-methionine.

It belongs to the methyltransferase superfamily. RNA methyltransferase RsmG family.

It is found in the cytoplasm. It carries out the reaction guanosine(527) in 16S rRNA + S-adenosyl-L-methionine = N(7)-methylguanosine(527) in 16S rRNA + S-adenosyl-L-homocysteine. In terms of biological role, specifically methylates the N7 position of guanine in position 527 of 16S rRNA. The chain is Ribosomal RNA small subunit methyltransferase G from Sorangium cellulosum (strain So ce56) (Polyangium cellulosum (strain So ce56)).